The primary structure comprises 1036 residues: MRDLIAVQRNSYYTFLTKSLKEEFDKISPIVDYTGQLELHLITSKMELKPPKITPVQAKRQDITYSVGMYMPVQLWNHQTGDVRQQMIYFGEIPLMTEDATFIINGAERVVVNQIVRSPGVYFQALWDKQHVRTFEATFMANRGAWIKYELDKQKLLWVRLDKNRKMPLVIFLQALGLNLQEIKPHLTNREVFERSWENHAVNNTEAALVEFYKKMRPGEPATVHSAKQLLYARFFDPKKYDLSEVGRYKLNQKLHLDIPLSVHILTTSDLLAGLDYLIQLCLDRARVDDIDHLANRRLKCVGELLQNQVRIGLSRLEKLLREKMTIGEKLQPSSLLNPKPLTSAIREFFASSQLSQFMDQINPLAELTHKRRISALGAGGLTRERAGFAVRDIHPSHYGRICPIETPEGPNAGLIGSLAIFARVNRYGFIETPYYPVKKGQVQKSIVYLTADVEDNYRLAPADVKYDREGQICSPIVAVRYRQEWTTCDASHVDYMAISPIQFISAATCLIPFLEHDDANRALMGSNMQRQAVPLIRASKPYVSTGQEKWMVQGVFSKADGIVRSVQATSIRIQHARGPVDYALLKYQKSNQDTCIDYRPLVWVGEHVVKGQLIAQSAAMDSGELALGQNVLIAYMPWEGYNFEDAFVISERLVYEDVYTSIHIEKYETDARQTKLGAEQITRQIPNVGEHALRQLDEHGIISVGSWVEAGSILVGKITPKGESDQPPEGKLLRAIFGEKNQHVKDSSLRMPNGSRGRVIHVRILSRDQGDELPAGVNISVRVSVAVKRVIQVGDKMAGRHGNKGIVARILPRCDMPYLPDGTPVDVILNPLGVPSRMNVGQLFEALLGLAAHRLRKRIKIVPFDEMYHKEASRIFVHQQLKRAALSAQTILYDGRSGEKFDNAVTVGMAYMLKLVHLVDEKIHARSTGPYSLVTQQPLGGRAQHGGQRLGEMEVWALEAYGAAYTLQELLTLKSDDMEGRTATLNAIVKAQPIPRGGTPESFKVLMRELQALGLDVTVLQLESQALCVMQSKLD.

It belongs to the RNA polymerase beta chain family. In terms of assembly, in plastids the minimal PEP RNA polymerase catalytic core is composed of four subunits: alpha, beta, beta', and beta''. When a (nuclear-encoded) sigma factor is associated with the core the holoenzyme is formed, which can initiate transcription.

The protein localises to the plastid. It is found in the chloroplast. The enzyme catalyses RNA(n) + a ribonucleoside 5'-triphosphate = RNA(n+1) + diphosphate. Functionally, DNA-dependent RNA polymerase catalyzes the transcription of DNA into RNA using the four ribonucleoside triphosphates as substrates. This is DNA-directed RNA polymerase subunit beta from Cyanidioschyzon merolae (strain NIES-3377 / 10D) (Unicellular red alga).